The sequence spans 629 residues: tRNA uridine 5-carboxymethylaminomethyl modification enzyme MnmG (629 aa).

13–18 (GGGHAG) is a binding site for FAD. Residue 273 to 287 (GPRYCPSIEDKIHRF) participates in NAD(+) binding.

This sequence belongs to the MnmG family. Homodimer. Heterotetramer of two MnmE and two MnmG subunits. FAD is required as a cofactor.

Its subcellular location is the cytoplasm. NAD-binding protein involved in the addition of a carboxymethylaminomethyl (cmnm) group at the wobble position (U34) of certain tRNAs, forming tRNA-cmnm(5)s(2)U34. This chain is tRNA uridine 5-carboxymethylaminomethyl modification enzyme MnmG, found in Shewanella amazonensis (strain ATCC BAA-1098 / SB2B).